The sequence spans 849 residues: Trehalose-phosphatase (849 aa).

A glycosyltransferase region spans residues 1-558 (MPSGAQGNTQ…VKALESHMTT (558 aa)).

In the N-terminal section; belongs to the glycosyltransferase 20 family. The protein in the C-terminal section; belongs to the trehalose phosphatase family. Requires Mg(2+) as cofactor.

It localises to the cytoplasm. It is found in the nucleus. The enzyme catalyses alpha,alpha-trehalose 6-phosphate + H2O = alpha,alpha-trehalose + phosphate. The protein operates within carbohydrate biosynthesis. Its function is as follows. Phosphatase catalytic subunit of the trehalose synthase complex that catalyzes the production of trehalose from glucose-6-phosphate and UDP-glucose in a two step process. This chain is Trehalose-phosphatase (tps2), found in Schizosaccharomyces pombe (strain 972 / ATCC 24843) (Fission yeast).